A 572-amino-acid polypeptide reads, in one-letter code: Mitochondrial chaperone TCM62 (572 aa).

The N-terminal 16 residues, 1–16 (MLRNCLRKLGNHQTKC), are a transit peptide targeting the mitochondrion. Residues 17–471 (SVKTLHTPIY…KANEPNFMTK (455 aa)) are Mitochondrial matrix-facing. A helical membrane pass occupies residues 472–488 (VGINAVLSAVILPSEVA). The Mitochondrial intermembrane segment spans residues 489–572 (FKNAYGYNYY…VYKKPERHKA (84 aa)).

Belongs to the chaperonin (HSP60) family. In terms of assembly, forms a high molecular mass protein complex of approximately 850 kDa.

The protein resides in the mitochondrion inner membrane. Functionally, chaperone. Required for the assembly of succinate dehydrogenase subunits. Ensures mitochondrial gene expression at elevated temperatures and prevents heat-aggregation of the ribosomal subunit VAR1. The chain is Mitochondrial chaperone TCM62 (TCM62) from Saccharomyces cerevisiae (strain YJM789) (Baker's yeast).